Reading from the N-terminus, the 406-residue chain is Cysteine desulfurase (406 aa).

Lys226 bears the N6-(pyridoxal phosphate)lysine mark. Residue Cys364 is the Cysteine persulfide intermediate of the active site.

The protein belongs to the class-V pyridoxal-phosphate-dependent aminotransferase family. Csd subfamily. In terms of assembly, homodimer. Interacts with SufE and the SufBCD complex composed of SufB, SufC and SufD. The interaction with SufE is required to mediate the direct transfer of the sulfur atom from the S-sulfanylcysteine. Pyridoxal 5'-phosphate is required as a cofactor.

It localises to the cytoplasm. The enzyme catalyses (sulfur carrier)-H + L-cysteine = (sulfur carrier)-SH + L-alanine. It catalyses the reaction L-selenocysteine + AH2 = hydrogenselenide + L-alanine + A + H(+). It functions in the pathway cofactor biosynthesis; iron-sulfur cluster biosynthesis. Functionally, cysteine desulfurases mobilize the sulfur from L-cysteine to yield L-alanine, an essential step in sulfur metabolism for biosynthesis of a variety of sulfur-containing biomolecules. Component of the suf operon, which is activated and required under specific conditions such as oxidative stress and iron limitation. Acts as a potent selenocysteine lyase in vitro, that mobilizes selenium from L-selenocysteine. Selenocysteine lyase activity is however unsure in vivo. The chain is Cysteine desulfurase from Escherichia coli O139:H28 (strain E24377A / ETEC).